The chain runs to 366 residues: Chorismate synthase (366 aa).

2 residues coordinate NADP(+): arginine 48 and arginine 54. FMN-binding positions include 132–134, 244–245, glycine 289, 304–308, and arginine 330; these read RSS, NA, and KPTSS.

The protein belongs to the chorismate synthase family. Homotetramer. FMNH2 serves as cofactor.

It carries out the reaction 5-O-(1-carboxyvinyl)-3-phosphoshikimate = chorismate + phosphate. The protein operates within metabolic intermediate biosynthesis; chorismate biosynthesis; chorismate from D-erythrose 4-phosphate and phosphoenolpyruvate: step 7/7. Its function is as follows. Catalyzes the anti-1,4-elimination of the C-3 phosphate and the C-6 proR hydrogen from 5-enolpyruvylshikimate-3-phosphate (EPSP) to yield chorismate, which is the branch point compound that serves as the starting substrate for the three terminal pathways of aromatic amino acid biosynthesis. This reaction introduces a second double bond into the aromatic ring system. In Methylorubrum extorquens (strain PA1) (Methylobacterium extorquens), this protein is Chorismate synthase.